Reading from the N-terminus, the 298-residue chain is UDP-N-acetylenolpyruvoylglucosamine reductase (298 aa).

Residues 27-191 (TGGEADVFVM…LDATFSLALE (165 aa)) form the FAD-binding PCMH-type domain. The active site involves arginine 170. Serine 220 (proton donor) is an active-site residue. Residue glutamate 290 is part of the active site.

Belongs to the MurB family. FAD serves as cofactor.

It is found in the cytoplasm. The enzyme catalyses UDP-N-acetyl-alpha-D-muramate + NADP(+) = UDP-N-acetyl-3-O-(1-carboxyvinyl)-alpha-D-glucosamine + NADPH + H(+). It functions in the pathway cell wall biogenesis; peptidoglycan biosynthesis. Cell wall formation. The chain is UDP-N-acetylenolpyruvoylglucosamine reductase from Listeria monocytogenes serotype 4a (strain HCC23).